We begin with the raw amino-acid sequence, 299 residues long: Ciliary microtubule inner protein 2B (299 aa).

The protein belongs to the CIMIP2 family. Expressed in airway epithelial cells.

Its subcellular location is the cytoplasm. The protein localises to the cytoskeleton. It is found in the cilium axoneme. Microtubule inner protein (MIP) part of the dynein-decorated doublet microtubules (DMTs) in cilia axoneme, which is required for motile cilia beating. The polypeptide is Ciliary microtubule inner protein 2B (cimip2b) (Danio rerio (Zebrafish)).